We begin with the raw amino-acid sequence, 284 residues long: Diaminopimelate epimerase (284 aa).

Substrate contacts are provided by Asn-13 and Asn-70. Residue Cys-79 is the Proton donor of the active site. Substrate contacts are provided by residues 80–81 (GN), Asn-167, Asn-200, and 218–219 (ER). Catalysis depends on Cys-227, which acts as the Proton acceptor. 228–229 (GT) serves as a coordination point for substrate.

This sequence belongs to the diaminopimelate epimerase family. In terms of assembly, homodimer.

The protein localises to the cytoplasm. It catalyses the reaction (2S,6S)-2,6-diaminopimelate = meso-2,6-diaminopimelate. It functions in the pathway amino-acid biosynthesis; L-lysine biosynthesis via DAP pathway; DL-2,6-diaminopimelate from LL-2,6-diaminopimelate: step 1/1. Its function is as follows. Catalyzes the stereoinversion of LL-2,6-diaminopimelate (L,L-DAP) to meso-diaminopimelate (meso-DAP), a precursor of L-lysine and an essential component of the bacterial peptidoglycan. This chain is Diaminopimelate epimerase, found in Prochlorococcus marinus (strain NATL1A).